The chain runs to 331 residues: Protein RecA (331 aa).

61 to 68 contacts ATP; it reads GPESSGKT.

Belongs to the RecA family.

The protein resides in the cytoplasm. Functionally, can catalyze the hydrolysis of ATP in the presence of single-stranded DNA, the ATP-dependent uptake of single-stranded DNA by duplex DNA, and the ATP-dependent hybridization of homologous single-stranded DNAs. It interacts with LexA causing its activation and leading to its autocatalytic cleavage. This is Protein RecA from Mycoplasma mobile (strain ATCC 43663 / 163K / NCTC 11711) (Mesomycoplasma mobile).